Consider the following 70-residue polypeptide: Putative defensin-like protein 73 (70 aa).

The N-terminal stretch at 1-29 is a signal peptide; the sequence is MNCKIEFMSFLVMTSIVILFLFVSGKVEA. 4 disulfides stabilise this stretch: cysteine 33-cysteine 68, cysteine 37-cysteine 57, cysteine 43-cysteine 66, and cysteine 47-cysteine 67.

The protein belongs to the DEFL family.

Its subcellular location is the secreted. The chain is Putative defensin-like protein 73 (LCR44) from Arabidopsis thaliana (Mouse-ear cress).